The following is a 1036-amino-acid chain: Lethal(2) giant larvae protein homolog 1 (1036 aa).

WD repeat units lie at residues 38–71 (SALA…FTGL), 78–119 (VTQM…GLSF), 139–175 (VTVV…GQTL), 199–233 (SLQG…DNVF), 239–271 (LESL…GSPP), 289–331 (AINK…ETLV), 339–373 (VIDF…VLDL), 395–473 (TCSA…YKLS), 517–592 (QKVA…RMLI), and 601–662 (TAVT…LRQS). Ser662 carries the phosphoserine modification. Basic residues predominate over residues 667-677 (RKSRVSGKKRT). A disordered region spans residues 667–688 (RKSRVSGKKRTPAASSKLQEAN). Over residues 679–688 (AASSKLQEAN) the composition is skewed to polar residues. WD repeat units lie at residues 722 to 782 (VRCL…KEVQ), 791 to 843 (AIAV…VSAK), 848 to 901 (LTAH…VHYS), and 915 to 938 (VFTR…SLSA). Position 957 is a phosphothreonine (Thr957). Phosphoserine occurs at positions 964, 982, and 989. The disordered stretch occupies residues 980 to 1002 (PESCEGSPSSAHSKRADTMEPPE).

This sequence belongs to the WD repeat L(2)GL family. As to quaternary structure, associated with nonmuscle myosin II heavy chain. Interacts with PRKCI/aPKC, PARD6B/Par-6 and PARD6A. Interacts with STX4A. Interacts with RAB10 (GDP-bound form); the interaction is direct and promotes RAB10 association with membranes and activation through competition with the Rab inhibitor GDI1. Interacts with DCAF1. In terms of processing, phosphorylated by PRKCI on at least one of the following Ser residues: Ser 654, Ser-658, Ser-662, Ser-669 and Ser-672. Phosphorylation is important for appropriated cell polarization.

The protein resides in the early endosome membrane. It is found in the golgi apparatus. Its subcellular location is the trans-Golgi network membrane. The protein localises to the golgi apparatus membrane. It localises to the cell projection. The protein resides in the axon. It is found in the cytoplasm. Its subcellular location is the cytoskeleton. Cortical cytoskeleton protein found in a complex involved in maintaining cell polarity and epithelial integrity. Involved in the regulation of mitotic spindle orientation, proliferation, differentiation and tissue organization of neuroepithelial cells. Involved in axonogenesis through RAB10 activation thereby regulating vesicular membrane trafficking toward the axonal plasma membrane. This is Lethal(2) giant larvae protein homolog 1 (Llgl1) from Mus musculus (Mouse).